The sequence spans 411 residues: Snake venom metalloproteinase ACLF (411 aa).

An N-terminal signal peptide occupies residues 1-20; sequence MIQVLLVTLCLAAFPYQGSS. Residues 21 to 189 constitute a propeptide that is removed on maturation; that stretch reads IILESGNVND…KKAFQLNLTP (169 aa). Residues 197–393 enclose the Peptidase M12B domain; that stretch reads RYVELVIVAD…NNPQCILNKP (197 aa). Ca(2+) is bound by residues glutamate 200 and aspartate 284. 3 disulfide bridges follow: cysteine 308–cysteine 388, cysteine 348–cysteine 372, and cysteine 350–cysteine 355. Histidine 333 contributes to the Zn(2+) binding site. Residue glutamate 334 is part of the active site. Positions 337 and 343 each coordinate Zn(2+). Residues cysteine 388, asparagine 391, valine 403, asparagine 406, leucine 408, and glutamate 410 each coordinate Ca(2+).

This sequence belongs to the venom metalloproteinase (M12B) family. P-I subfamily. Monomer. Zn(2+) is required as a cofactor. As to expression, expressed by the venom gland.

The protein resides in the secreted. With respect to regulation, inhibited by EDTA and 1,10-phenanthroline, but not by PMSF. Functionally, snake venom zinc metalloprotease that has fibrinolytic activity. The recombinant enzyme cleaves both alpha- and beta-chains of fibrinogen, but not the gamma-chain. The recombinant protein does not produce hemorrhage in mice. Cleaves the peptide substrate Abz-LVEALYQ-EDDnp at the Ala-Leu bond in vitro. The protein is Snake venom metalloproteinase ACLF (ACLPREF) of Agkistrodon contortrix laticinctus (Broad-banded copperhead).